A 572-amino-acid polypeptide reads, in one-letter code: Phosphoenolpyruvate-protein phosphotransferase (572 aa).

The Tele-phosphohistidine intermediate role is filled by His191. Phosphoenolpyruvate is bound by residues Arg298 and Arg334. The Mg(2+) site is built by Glu433 and Asp457. Residues Asn456 to Asp457 and Arg467 contribute to the phosphoenolpyruvate site. The active-site Proton donor is the Cys504.

This sequence belongs to the PEP-utilizing enzyme family. In terms of assembly, homodimer. It depends on Mg(2+) as a cofactor.

The protein resides in the cytoplasm. The enzyme catalyses L-histidyl-[protein] + phosphoenolpyruvate = N(pros)-phospho-L-histidyl-[protein] + pyruvate. In terms of biological role, general (non sugar-specific) component of the phosphoenolpyruvate-dependent sugar phosphotransferase system (sugar PTS). This major carbohydrate active-transport system catalyzes the phosphorylation of incoming sugar substrates concomitantly with their translocation across the cell membrane. Enzyme I transfers the phosphoryl group from phosphoenolpyruvate (PEP) to the phosphoryl carrier protein (HPr). The polypeptide is Phosphoenolpyruvate-protein phosphotransferase (Staphylococcus aureus (strain MSSA476)).